A 59-amino-acid chain; its full sequence is MSDVNAHLLAQRIDTVLDILVAGDYHSAIHNLEILKAELLALAADDAEQKNQPKAPWEI.

It belongs to the UPF0509 family.

This is UPF0509 protein KPK_3153 from Klebsiella pneumoniae (strain 342).